The following is a 2153-amino-acid chain: RNA-directed RNA polymerase L (2153 aa).

Mn(2+)-binding residues include histidine 36, glutamate 54, aspartate 97, glutamate 110, and valine 111. The active-site For endonuclease activity is lysine 124. Positions 957 to 1143 constitute a RdRp catalytic domain; sequence TGNVIKFKRR…AVNQEMWKSM (187 aa). Aspartate 1100 contributes to the Mg(2+) binding site. The interval 1291 to 2153 is interaction with the viral nucleoprotein; that stretch reads KQAFYSYKHT…FPHDPVSSFY (863 aa).

Belongs to the Bunyavirales RNA polymerase family. Interacts with the viral nucleoprotein; this interaction is required for RdRp function. Mn(2+) serves as cofactor. The cofactor is Mg(2+).

The protein resides in the host cytoplasm. It localises to the host perinuclear region. It catalyses the reaction RNA(n) + a ribonucleoside 5'-triphosphate = RNA(n+1) + diphosphate. Functionally, RNA-dependent RNA polymerase, which is responsible for the replication and transcription of the viral RNA genome using antigenomic RNA as an intermediate. During transcription, synthesizes subgenomic RNAs and assures their capping by a cap-snatching mechanism, which involves the endonuclease activity cleaving the host capped pre-mRNAs. These short capped RNAs are then used as primers for viral transcription. Cleaves ssRNA substrates but not DNA. Seems to downregulate the expression of its own and heterologous mRNAs through its endonuclease activity. This Sin Nombre orthohantavirus (SNV) protein is RNA-directed RNA polymerase L.